We begin with the raw amino-acid sequence, 557 residues long: MEPAAEILVDSPDVVYSPETIEARYEYRTTRVSREGGVLRVQPRATRFTFRTARQVPRLGVMLVGWGGNNGSTLTAAVLANRLRLTWPTRTGRKEANYYGSLTQAGTVNLGLDENGREVFVPFSALLPMVAPNDLVFDGWDISSLNLAEAMRRAQVLDCGLQEQLWPHMESLRPRPSVYIPEFIAANQTARADNLIPGTRAQQLEQIRKDIRDFRSSAGLDKVIVLWTANTERFCEVVPGRNDTAENLLHTIQLGLEVSPSTLFAVASILEDCAFLNGSPQNTLVPGALELASQRHVFVGGDDFKSGQTKVKSVLVDFLIGSGLKTMSIVSYNHLGNNDGQNLSAPLQFRSKEVTKSSVVDDMVHSNHVLYAPGERPDHCVVIKYVPYVGDSKRALDEYTSELMLGGTNTLVLHNTCEDSLLAAPIMLDLVLLTELCQRVSFCTDSDPEPQGFHTVLSLLSFLFKAPLVPPGSPVVNALFRQRSCIENIFRACVGLPPQNHMLLEHKMERPGPGIKPGEVVATSPLPCKKEPTPATNGCTGDANGHPQAPTPKLSTA.

Positions 67, 68, 69, 70, 141, 177, 178, 188, 191, 228, 229, 230, 231, 278, 279, 303, 306, 337, 338, 339, and 352 each coordinate NAD(+). Position 279 is a phosphoserine (Ser279). The residue at position 357 (Ser357) is a Phosphoserine. Positions 390, 391, 419, and 420 each coordinate NAD(+). The tract at residues 512-557 is disordered; that stretch reads GPGIKPGEVVATSPLPCKKEPTPATNGCTGDANGHPQAPTPKLSTA. At Ser524 the chain carries Phosphoserine.

This sequence belongs to the myo-inositol 1-phosphate synthase family. The cofactor is NAD(+). In testis, it is expressed in Sertoli cells. Highly expressed in 2 types of germ cells, pachytene spermatocytes and round spermatids.

The protein localises to the cytoplasm. It carries out the reaction D-glucose 6-phosphate = 1D-myo-inositol 3-phosphate. The protein operates within polyol metabolism; myo-inositol biosynthesis; myo-inositol from D-glucose 6-phosphate: step 1/2. Its function is as follows. Key enzyme in myo-inositol biosynthesis pathway that catalyzes the conversion of glucose 6-phosphate to 1-myo-inositol 1-phosphate in a NAD-dependent manner. Rate-limiting enzyme in the synthesis of all inositol-containing compounds. The protein is Inositol-3-phosphate synthase 1 (Isyna1) of Mus musculus (Mouse).